Here is a 254-residue protein sequence, read N- to C-terminus: Pimeloyl-[acyl-carrier protein] methyl ester esterase (254 aa).

Positions 14–242 constitute an AB hydrolase-1 domain; that stretch reads LVLLHGWGMN…ASHAPFISHP (229 aa). Substrate is bound by residues Trp20, 82–83, and 143–147; these read SL and FLAIQ. Ser82 serves as the catalytic Nucleophile. Catalysis depends on residues Asp207 and His235. Position 235 (His235) interacts with substrate.

The protein belongs to the AB hydrolase superfamily. Carboxylesterase BioH family. As to quaternary structure, monomer.

It is found in the cytoplasm. The enzyme catalyses 6-carboxyhexanoyl-[ACP] methyl ester + H2O = 6-carboxyhexanoyl-[ACP] + methanol + H(+). It participates in cofactor biosynthesis; biotin biosynthesis. The physiological role of BioH is to remove the methyl group introduced by BioC when the pimeloyl moiety is complete. It allows to synthesize pimeloyl-ACP via the fatty acid synthetic pathway through the hydrolysis of the ester bonds of pimeloyl-ACP esters. The sequence is that of Pimeloyl-[acyl-carrier protein] methyl ester esterase from Aeromonas hydrophila subsp. hydrophila (strain ATCC 7966 / DSM 30187 / BCRC 13018 / CCUG 14551 / JCM 1027 / KCTC 2358 / NCIMB 9240 / NCTC 8049).